The primary structure comprises 429 residues: Multifunctional CCA protein (429 aa).

2 residues coordinate ATP: G27 and R30. CTP contacts are provided by G27 and R30. D40 and D42 together coordinate Mg(2+). The ATP site is built by R110, R162, and R165. The CTP site is built by R110, R162, and R165. One can recognise an HD domain in the interval 251 to 352; sequence TGVHTMMVVD…VRLLERCDAL (102 aa).

This sequence belongs to the tRNA nucleotidyltransferase/poly(A) polymerase family. Bacterial CCA-adding enzyme type 1 subfamily. As to quaternary structure, monomer. Can also form homodimers and oligomers. The cofactor is Mg(2+). Ni(2+) serves as cofactor.

The catalysed reaction is a tRNA precursor + 2 CTP + ATP = a tRNA with a 3' CCA end + 3 diphosphate. It catalyses the reaction a tRNA with a 3' CCA end + 2 CTP + ATP = a tRNA with a 3' CCACCA end + 3 diphosphate. Its function is as follows. Catalyzes the addition and repair of the essential 3'-terminal CCA sequence in tRNAs without using a nucleic acid template. Adds these three nucleotides in the order of C, C, and A to the tRNA nucleotide-73, using CTP and ATP as substrates and producing inorganic pyrophosphate. tRNA 3'-terminal CCA addition is required both for tRNA processing and repair. Also involved in tRNA surveillance by mediating tandem CCA addition to generate a CCACCA at the 3' terminus of unstable tRNAs. While stable tRNAs receive only 3'-terminal CCA, unstable tRNAs are marked with CCACCA and rapidly degraded. The polypeptide is Multifunctional CCA protein (Ralstonia nicotianae (strain ATCC BAA-1114 / GMI1000) (Ralstonia solanacearum)).